Consider the following 304-residue polypeptide: GS homeobox 2 (304 aa).

A disordered region spans residues 116–151; the sequence is AQFCPRVNHAHHHHHPPQHHHHHHQPQQPGSAAAAA. Residues 123-140 are compositionally biased toward basic residues; the sequence is NHAHHHHHPPQHHHHHHQ. Over residues 141 to 151 the composition is skewed to low complexity; the sequence is PQQPGSAAAAA. Positions 202–261 form a DNA-binding region, homeobox; that stretch reads GKRMRTAFTSTQLLELEREFSSNMYLSRLRRIEIATYLNLSEKQVKIWFQNRRVKHKKEG. Positions 283–304 are disordered; the sequence is RSEDEDSLSPASANDDKEISPL.

The protein belongs to the Antp homeobox family.

Its subcellular location is the nucleus. The protein resides in the cytoplasm. Functionally, transcription factor that binds 5'-CNAATTAG-3' DNA sequence and regulates the expression of numerous genes including genes important for brain development. During telencephalic development, causes ventralization of pallial progenitors and, depending on the developmental stage, specifies different neuronal fates. At early stages, necessary and sufficient to correctly specify the ventral lateral ganglionic eminence (LGE) and its major derivatives, the striatal projection neurons. At later stages, may specify LGE progenitors toward dorsal LGE fates, including olfactory bulb interneurons. In Homo sapiens (Human), this protein is GS homeobox 2 (GSX2).